The chain runs to 244 residues: 5-oxoprolinase subunit A (244 aa).

Belongs to the LamB/PxpA family. Forms a complex composed of PxpA, PxpB and PxpC.

It carries out the reaction 5-oxo-L-proline + ATP + 2 H2O = L-glutamate + ADP + phosphate + H(+). Its function is as follows. Catalyzes the cleavage of 5-oxoproline to form L-glutamate coupled to the hydrolysis of ATP to ADP and inorganic phosphate. The polypeptide is 5-oxoprolinase subunit A (Salmonella typhimurium (strain LT2 / SGSC1412 / ATCC 700720)).